The following is a 153-amino-acid chain: Two-component response regulator ARR17 (153 aa).

One can recognise a Response regulatory domain in the interval 21 to 149 (HVLAVDDNLI…DVEKLKCHLL (129 aa)). Asp82 is modified (4-aspartylphosphate).

This sequence belongs to the ARR family. Type-A subfamily. Two-component system major event consists of a His-to-Asp phosphorelay between a sensor histidine kinase (HK) and a response regulator (RR). In plants, the His-to-Asp phosphorelay involves an additional intermediate named Histidine-containing phosphotransfer protein (HPt). This multistep phosphorelay consists of a His-Asp-His-Asp sequential transfer of a phosphate group between first a His and an Asp of the HK protein, followed by the transfer to a conserved His of the HPt protein and finally the transfer to an Asp in the receiver domain of the RR protein.

Its subcellular location is the nucleus. Functions as a response regulator involved in His-to-Asp phosphorelay signal transduction system. Phosphorylation of the Asp residue in the receiver domain activates the ability of the protein to promote the transcription of target genes. Type-A response regulators seem to act as negative regulators of the cytokinin signaling. This is Two-component response regulator ARR17 (ARR17) from Arabidopsis thaliana (Mouse-ear cress).